The following is a 342-amino-acid chain: Phomopsin biosynthesis cluster protein B' (342 aa).

Residues 1-22 (MESIAKAKSLPNKGRTYDSQRP) are disordered. The chain crosses the membrane as a helical span at residues 87–107 (VLIIGCAVISLFAIIGALGFA). The disordered stretch occupies residues 118–186 (CASPAHQNPH…QCGESPDEAQ (69 aa)). Over residues 144-155 (HSGSHSSSSSTN) the composition is skewed to low complexity. Residue Asn248 is glycosylated (N-linked (GlcNAc...) asparagine).

The protein resides in the membrane. In terms of biological role, part of the gene cluster that mediates the biosynthesis of the phomopsins, a group of hexapeptide mycotoxins which infects lupins and causes lupinosis disease in livestock. The role of phomB' within the phomopsins biosynthesis pathway has still to be determined. The pathway starts with the processing of the precursor phomA by several endopeptidases including kexin proteases as well as the cluster-specific S41 family peptidase phomP1 and the oligopeptidase phomG to produce 10 identical copies of the hexapeptide Tyr-Val-Ile-Pro-Ile-Asp. After being excised from the precursor peptide, the core peptides are cyclized and modified post-translationally by enzymes encoded within the gene cluster. The timing and order of proteolysis of the phomA precursor and PTMs are still unknown. Two tyrosinase-like enzymes, phomQ1 and phomQ2, catalyze the chlorination and hydroxylation of Tyr, respectively. PhomYb, is proposed to be involved in the construction of the macrocyclic structure. The other 4 ustYa family proteins may be involved in PTMs that generate the unique structure of phomopsin A. PhomYa is required for the hydroxylation of C-beta of Tyr. PhomYc, phomYd, and phomYe are responsible for the biosynthesis of 2,3-dehydroisoleucine (dIle), 2,3-dehydroaspartic acid (dAsp), and 3,4-dehydroproline (dPro), respectively. While dIle formation by phomYc is indispensable for the installation of dAsp by phomYd, the order of the other PTMs have not been elucidated yet. Most of the biosynthetic enzymes likely have broad substrate specificity, and thus, there might be a metabolic grid from a precursor to phomopsin A. The enzyme(s) responsible for the biosynthesis of 3,4-dehydrovaline (dVal) have also not been identified yet. Finally, phomM acts as an S-adenosylmethionine-dependent alpha-N-methyltransferase that catalyzes two successive N-methylation reactions, converting N-desmethyl-phomopsin A to phomopsin A and phomopsin A further to an N,N-dimethylated congener called phomopsin E. The polypeptide is Phomopsin biosynthesis cluster protein B' (Diaporthe leptostromiformis (Lupinosis disease fungus)).